The following is a 33-amino-acid chain: Brevinin-2Ef (33 aa).

Cys-27 and Cys-33 are oxidised to a cystine.

In terms of tissue distribution, expressed by the skin glands.

It localises to the secreted. Its function is as follows. Shows antibacterial activity against representative Gram-negative and Gram-positive bacterial species, and hemolytic activity. This is Brevinin-2Ef from Pelophylax ridibundus (Marsh frog).